A 130-amino-acid polypeptide reads, in one-letter code: Fluoride-specific ion channel FluC (130 aa).

4 helical membrane passes run 10 to 30, 41 to 61, 72 to 89, and 105 to 125; these read FAVA…SLWF, GTLI…TVAM, LLFG…STYE, and LVYW…GILL. Na(+)-binding residues include Gly-80 and Thr-83.

This sequence belongs to the fluoride channel Fluc/FEX (TC 1.A.43) family.

It localises to the cell inner membrane. It carries out the reaction fluoride(in) = fluoride(out). Its activity is regulated as follows. Na(+) is not transported, but it plays an essential structural role and its presence is essential for fluoride channel function. Functionally, fluoride-specific ion channel. Important for reducing fluoride concentration in the cell, thus reducing its toxicity. This Synechococcus sp. (strain JA-2-3B'a(2-13)) (Cyanobacteria bacterium Yellowstone B-Prime) protein is Fluoride-specific ion channel FluC.